The primary structure comprises 245 residues: uncharacterized protein (245 aa).

Helical transmembrane passes span 38–58, 68–88, 100–120, 129–149, 194–214, and 217–237; these read IYPA…AIFI, TIEL…QGYF, IWSL…LILA, VLFI…FVSA, VNNI…FLMN, and IAFI…LIIH.

Belongs to the acyltransferase 3 family.

Its subcellular location is the cell membrane. This is an uncharacterized protein from Haemophilus influenzae (strain ATCC 51907 / DSM 11121 / KW20 / Rd).